The sequence spans 1252 residues: Guanine nucleotide exchange factor SDC25 (1252 aa).

Positions 26–97 (QPIDVVECTY…PPSFTRSILN (72 aa)) constitute an SH3 domain. 2 disordered regions span residues 409–454 (IPAS…DTIW) and 623–648 (LNLD…DEYE). The segment covering 416–428 (TSCSSETSHHSPS) has biased composition (low complexity). The region spanning 782 to 914 (SNNRIKGGSK…LLKEVNQKFK (133 aa)) is the N-terminal Ras-GEF domain. A Ras-GEF domain is found at 952–1199 (DPVLFATQLT…YQLSLIIEPK (248 aa)). The segment at 1201–1252 (RKKVVPNSNSNNKSQEKSRDDQTDEGKTSTKKDRFSKFQLHKTKKKAPKVSK) is disordered. Residues 1214 to 1236 (SQEKSRDDQTDEGKTSTKKDRFS) are compositionally biased toward basic and acidic residues. Over residues 1239–1252 (QLHKTKKKAPKVSK) the composition is skewed to basic residues.

Its function is as follows. Promotes the exchange of Ras-bound GDP by GTP. The chain is Guanine nucleotide exchange factor SDC25 (SDC25) from Saccharomyces cerevisiae (strain RM11-1a) (Baker's yeast).